The sequence spans 236 residues: 3-deoxy-D-manno-octulosonic acid kinase (236 aa).

Residue D167 is part of the active site.

Belongs to the protein kinase superfamily. KdkA/RfaP family.

The protein resides in the cell inner membrane. It carries out the reaction an alpha-Kdo-(2-&gt;6)-lipid IVA + ATP = a 4-O-phospho-alpha-Kdo-(2-&gt;6)-lipid IVA + ADP + H(+). It functions in the pathway bacterial outer membrane biogenesis; LPS core biosynthesis. In terms of biological role, catalyzes the ATP-dependent phosphorylation of the 3-deoxy-D-manno-octulosonic acid (Kdo) residue in Kdo-lipid IV(A) at the 4-OH position. The sequence is that of 3-deoxy-D-manno-octulosonic acid kinase from Vibrio vulnificus (strain CMCP6).